The primary structure comprises 622 residues: Palmitoyltransferase ZDHHC13 (622 aa).

Position 1 is an N-acetylmethionine (Met-1). At 1–291 the chain is on the cytoplasmic side; it reads MEGPGLGSQC…RLWRWLHKCE (291 aa). ANK repeat units follow at residues 43–78, 81–110, 115–144, 148–177, 181–211, 216–245, and 249–277; these read PLIE…VRQP, ENVS…VIDQ, LNST…DPTL, EGFS…SVNM, NGQT…SLSV, HQNT…SLDI, and KGET…KMRA. The chain crosses the membrane as a helical span at residues 292-312; sequence LFLLLILSMITLWAVGYILDF. Topologically, residues 313–320 are lumenal; it reads NSDSWLLK. The chain crosses the membrane as a helical span at residues 321-341; it reads GCLLVALFFLTSLFPRFLVGY. The Cytoplasmic segment spans residues 342 to 347; the sequence is KNLVYL. A helical transmembrane segment spans residues 348–368; it reads PTVFLLSSIFWIFMTWFILFF. Residues 369–371 lie on the Lumenal side of the membrane; sequence PDT. Residues 372 to 392 form a helical membrane-spanning segment; sequence AGSPLYFAFIFSIMAFLYFFY. The Cytoplasmic segment spans residues 393–470; that stretch reads KTWATDPGFT…RCIGFGNHHH (78 aa). The 51-residue stretch at 426 to 476 folds into the DHHC domain; sequence TFCTSCLIRKPLRSLHCHVCNSCVARFDQHCFWTGRCIGFGNHHHYIFFLL. Cys-456 serves as the catalytic S-palmitoyl cysteine intermediate. A helical membrane pass occupies residues 471 to 491; it reads YIFFLLSLSMVCDWIIYGSFV. Topologically, residues 492–518 are lumenal; it reads YWSNHCATTFKEDGLWTYLNQIVACSP. The helical transmembrane segment at 519–539 threads the bilayer; that stretch reads WVLYIFMLAAFHFSWSTFLLI. The Cytoplasmic segment spans residues 540–622; that stretch reads NQLFQIAFLG…PAKEKVLRSV (83 aa).

This sequence belongs to the DHHC palmitoyltransferase family. AKR/ZDHHC17 subfamily. Interacts (via ANK repeats) with CLIP3. Interacts (via ANK repeats) with DNAJC5 (via C-terminus). Interacts (via ANK repeats) with HTT. Interacts (via ANK repeats) with MAP6. Interacts (via ANK repeats) with SNAP23. Interacts (via ANK repeats) with SNAP25. May interact (via ANK repeats) with SPRED2. Expressed in most adult tissues, but at low levels in the liver, skin, and lung.

The protein localises to the golgi apparatus membrane. It localises to the cytoplasmic vesicle membrane. The catalysed reaction is L-cysteinyl-[protein] + hexadecanoyl-CoA = S-hexadecanoyl-L-cysteinyl-[protein] + CoA. In terms of biological role, palmitoyltransferase that could catalyze the addition of palmitate onto various protein substrates. Palmitoyltransferase for HTT and GAD2. May play a role in Mg(2+) transport. The polypeptide is Palmitoyltransferase ZDHHC13 (Mus musculus (Mouse)).